A 928-amino-acid chain; its full sequence is MORC family CW-type zinc finger protein 4 (928 aa).

A CW-type zinc finger spans residues 417–469 (RIPDQTWVQCDECLKWRRLPGMVDPSTLPARWFCYYNPHPKFKRCSVPEEQER). The Zn(2+) site is built by Cys-426, Cys-429, Cys-450, and Cys-461. Disordered stretches follow at residues 474–510 (LHRSKAKQQVEAAEKKQKPMESDKYQVFSNPPKTPPL), 527–546 (NSPSLLPSVREESRSPPRLK), 599–649 (AYPE…DQDQ), and 718–766 (RAES…LKRT). The segment covering 485-497 (AAEKKQKPMESDK) has biased composition (basic and acidic residues). 3 stretches are compositionally biased toward basic and acidic residues: residues 626-636 (ESNKHTEENRE), 739-748 (KGKDCQDSRS), and 756-766 (TPKESEELKRT). Residues 758-867 (KESEELKRTT…LEVLQKAQVS (110 aa)) adopt a coiled-coil conformation.

The protein resides in the nucleus. Its function is as follows. Histone methylation reader which binds to non-methylated (H3K4me0), monomethylated (H3K4me1), dimethylated (H3K4me2) and trimethylated (H3K4me3) 'Lys-4' on histone H3. The order of binding preference is H3K4me3 &gt; H3K4me2 &gt; H3K4me1 &gt; H3K4me0. The sequence is that of MORC family CW-type zinc finger protein 4 (Morc4) from Mus musculus (Mouse).